Reading from the N-terminus, the 174-residue chain is RNA pyrophosphohydrolase (174 aa).

The 144-residue stretch at 6–149 (GYRPNVGIIL…KRDVYLGALK (144 aa)) folds into the Nudix hydrolase domain. Residues 38–59 (GGIKPGESPETAMYRELYEEVG) carry the Nudix box motif.

It belongs to the Nudix hydrolase family. RppH subfamily. The cofactor is a divalent metal cation.

Functionally, accelerates the degradation of transcripts by removing pyrophosphate from the 5'-end of triphosphorylated RNA, leading to a more labile monophosphorylated state that can stimulate subsequent ribonuclease cleavage. The chain is RNA pyrophosphohydrolase from Neisseria meningitidis serogroup C / serotype 2a (strain ATCC 700532 / DSM 15464 / FAM18).